The sequence spans 235 residues: Exosome complex component RRP46 (235 aa).

Basic and acidic residues predominate over residues 1–13; sequence MEEETHTDAKIRA. The interval 1–24 is disordered; that stretch reads MEEETHTDAKIRAENGTGSSPRGP. A Phosphoserine modification is found at serine 20.

It belongs to the RNase PH family. As to quaternary structure, homodimer. Component of the RNA exosome core complex (Exo-9), composed of EXOSC1, EXOSC2, EXOSC3, EXOSC4, EXOSC5, EXOSC6, EXOSC7, EXOSC8 and EXOSC9; within the complex interacts with EXOSC3, EXOSC8, and EXOSC9. The catalytically inactive RNA exosome core complex (Exo-9) associates with the catalytic subunit EXOSC10/RRP6. Exo-9 may associate with DIS3 to form the nucleolar exosome complex, or DIS3L to form the cytoplasmic exosome complex. Exo-9 is formed by a hexameric base ring consisting of the heterodimers EXOSC4-EXOSC9, EXOSC5-EXOSC8 and EXOSC6-EXOSC7, and a cap ring consisting of EXOSC1, EXOSC2 and EXOSC3. The RNA exosome complex associates with cofactors C1D/RRP47, MPHOSPH6/MPP6 and MTREX/MTR4. Interacts with GTPBP1. Interacts with ZC3HAV1. Interacts with DDX17 only in the presence of ZC3HAV1 in an RNA-independent manner. Highly expressed in a variety of hematopoietic and epithelial tumor cell lines, but not in normal hematopoietic tissues or other normal tissue, with the exception of testis.

Its subcellular location is the nucleus. The protein localises to the nucleolus. It localises to the cytoplasm. Functionally, non-catalytic component of the RNA exosome complex which has 3'-&gt;5' exoribonuclease activity and participates in a multitude of cellular RNA processing and degradation events. In the nucleus, the RNA exosome complex is involved in proper maturation of stable RNA species such as rRNA, snRNA and snoRNA, in the elimination of RNA processing by-products and non-coding 'pervasive' transcripts, such as antisense RNA species and promoter-upstream transcripts (PROMPTs), and of mRNAs with processing defects, thereby limiting or excluding their export to the cytoplasm. The RNA exosome may be involved in Ig class switch recombination (CSR) and/or Ig variable region somatic hypermutation (SHM) by targeting AICDA deamination activity to transcribed dsDNA substrates. In the cytoplasm, the RNA exosome complex is involved in general mRNA turnover and specifically degrades inherently unstable mRNAs containing AU-rich elements (AREs) within their 3' untranslated regions, and in RNA surveillance pathways, preventing translation of aberrant mRNAs. It seems to be involved in degradation of histone mRNA. The catalytic inactive RNA exosome core complex of 9 subunits (Exo-9) is proposed to play a pivotal role in the binding and presentation of RNA for ribonucleolysis, and to serve as a scaffold for the association with catalytic subunits and accessory proteins or complexes. In vitro, EXOSC5 does not bind or digest single-stranded RNA and binds to double-stranded DNA without detectable DNase activity. The polypeptide is Exosome complex component RRP46 (EXOSC5) (Homo sapiens (Human)).